The primary structure comprises 280 residues: Ribosomal RNA-processing protein 7 homolog A (280 aa).

In terms of domain architecture, RRM spans 59–159; the sequence is RTLFVLNVPP…TGIHKWISDY (101 aa). S99 is modified (phosphoserine).

This sequence belongs to the RRP7 family. In terms of assembly, part of the small subunit (SSU) processome, composed of more than 70 proteins and the RNA chaperone small nucleolar RNA (snoRNA) U3. Interacts with NOL6; required for NOL6 localization to nucleolus.

Its subcellular location is the nucleus. It is found in the nucleolus. The protein localises to the cell projection. The protein resides in the cilium. It localises to the cytoplasm. Its subcellular location is the cytoskeleton. It is found in the microtubule organizing center. The protein localises to the centrosome. Its function is as follows. Nucleolar protein that is involved in ribosomal RNA (rRNA) processing. Also plays a role in primary cilia resorption, and cell cycle progression in neurogenesis and neocortex development. Part of the small subunit (SSU) processome, first precursor of the small eukaryotic ribosomal subunit. During the assembly of the SSU processome in the nucleolus, many ribosome biogenesis factors, an RNA chaperone and ribosomal proteins associate with the nascent pre-rRNA and work in concert to generate RNA folding, modifications, rearrangements and cleavage as well as targeted degradation of pre-ribosomal RNA by the RNA exosome. In Pongo abelii (Sumatran orangutan), this protein is Ribosomal RNA-processing protein 7 homolog A (RRP7A).